Reading from the N-terminus, the 725-residue chain is Homeobox protein unc-62 (725 aa).

In terms of domain architecture, MEIS N-terminal spans 133–218; sequence SSDVCSSASF…PLDIVGDERA (86 aa). Disordered stretches follow at residues 214–258, 295–317, 329–359, 386–419, 491–555, and 615–661; these read GDER…PYEP, SSSS…LHST, VSSP…GNSM, SLHQ…PPPQ, VKME…KRKV, and IDQN…PDPT. Residues 219–239 are compositionally biased toward low complexity; that stretch reads SSSQPPMSPGSMGHHGHSGSP. The segment covering 388–400 has biased composition (basic residues); that stretch reads HQHHLHHPHHFPH. Residues 498-508 show a composition bias toward low complexity; it reads SVSSSKSGGKK. Residues 541–550 show a composition bias toward polar residues; the sequence is LSDSANGSQN. Positions 552–614 form a DNA-binding region, homeobox; TALE-type; it reads KRKVPKVFSK…NARRRIVQPM (63 aa).

The protein belongs to the TALE/MEIS homeobox family.

It is found in the nucleus. Acts redundantly with ceh-20 and ceh-40 to perform overlapping roles during embryogenesis. Required for postembryonic development of the ectoderm, including the Q, V and P cell lineages, playing a crucial role in ensuring that these cells and their descendants undergo their invariant patterns of cell division, migration, fusion and morphogenesis. Has a role in the mig-13 pathway to promote anterior migration of neuroblasts in the Q lineage. Required for multiple roles in regulating vulva development. In Caenorhabditis briggsae, this protein is Homeobox protein unc-62 (unc-62).